The following is a 980-amino-acid chain: SLIT and NTRK-like protein 3 (980 aa).

The first 27 residues, 1–27, serve as a signal peptide directing secretion; sequence MMKPSIAEMLHRGRMLWIILLSTIALG. Over 30-655 the chain is Extracellular; that stretch reads TPIPLIEDSE…SPPGGPVPLS (626 aa). Residue Asn-69 is glycosylated (N-linked (GlcNAc...) asparagine). LRR repeat units follow at residues 79 to 100, 103 to 124, 127 to 148, 151 to 172, 175 to 196, and 198 to 219; these read RPFK…SFLH, NAVS…AFNG, ILKR…TFLG, SLEY…AFRN, KLRV…LFKA, and SLTH…GMLD. The region spanning 233–284 is the LRRCT 1 domain; it reads NPWNCTCEIVQLKSWLERIPYTALVGDITCETPFHFHGKDLREIKKTELCPL. The segment at 326 to 361 is disordered; sequence EYKSSNKQPKPTKQPRTPRPPSTSQALYPGPNQPPI. The 43-residue stretch at 365–407 folds into the LRRNT domain; sequence QTRPPIPIICPTGCTCNLHINDLGLTVNCKERGFNNISELLPR. 6 LRR repeats span residues 410–431, 434–455, 458–479, 482–503, 506–527, and 529–550; these read NAKK…DFWN, SLDL…AFIN, NLKS…MFRG, SLHY…AFSL, NLKL…AFAG, and SLAR…GVLE. Residues 563 to 614 enclose the LRRCT 2 domain; sequence NPWDCTCDLVPFKQWIETISSVSVVGDVLCRTPENLTHRDVRTIELEVLCPE. Asn-597 is a glycosylation site (N-linked (GlcNAc...) asparagine). The interval 622 to 644 is disordered; it reads GPSPPQPGDYHPNGGPTSASPYE. The helical transmembrane segment at 656–676 threads the bilayer; the sequence is VLILSLLVLFFSAVFVAAGLF. At 677-980 the chain is on the cytoplasmic side; sequence AYVLRRRRKK…EVLEKTAYRF (304 aa). 2 disordered regions span residues 709–735 and 762–785; these read LFED…EKAP and EEEV…GTQP. The span at 715-725 shows a compositional bias: gly residues; the sequence is GNSGGSGGGGR.

The protein belongs to the SLITRK family. Broadly expressed in embryonic brain with highest expression in cortical plate, pyramidal cell layer of the hippocampus, thalamus and hypothalamus.

It localises to the membrane. In terms of biological role, suppresses neurite outgrowth. The polypeptide is SLIT and NTRK-like protein 3 (Slitrk3) (Mus musculus (Mouse)).